The chain runs to 62 residues: Ferredoxin-1 (62 aa).

2 4Fe-4S ferredoxin-type domains span residues Trp3 to Gly32 and Lys33 to Asn62. Positions 12 and 18 each coordinate [3Fe-4S] cluster. Cys22, Cys42, Cys45, and Cys48 together coordinate [4Fe-4S] cluster. A [3Fe-4S] cluster-binding site is contributed by Cys52.

As to quaternary structure, homodimer. The cofactor is [3Fe-4S] cluster. [4Fe-4S] cluster is required as a cofactor.

Its function is as follows. Ferredoxins are iron-sulfur proteins that transfer electrons in a wide variety of metabolic reactions. This ferredoxin serves as a carrier for pyruvate dehydrogenase. The protein is Ferredoxin-1 of Nitratidesulfovibrio vulgaris (strain DSM 19637 / Miyazaki F) (Desulfovibrio vulgaris).